We begin with the raw amino-acid sequence, 292 residues long: Zinc finger protein OZF (292 aa).

C2H2-type zinc fingers lie at residues 16–38 (FACKVCGKLFSHKSNLTEHEHFH), 44–66 (FECNECGKAFSQKQYVIKHQSTH), 72–94 (FECSDCGKAFSQKENLLTHQKIH), 100–122 (FECKDCGKAFIQKSNLIRHQRTH), 128–150 (FICKECGKTFSGKSNLTEHEKIH), 156–178 (FKCNECGTAFGQKKYLIKHQNIH), 184–206 (YECNECGKAFSQRTSLIVHVRIH), 212–234 (YECNVCGKAFSQSSSLTVHVRSH), 240–262 (YGCNECGKAFSQFSTLALHLRIH), and 268–290 (YQCSECGKAFSQKSHHIRHQKIH). Glycyl lysine isopeptide (Lys-Gly) (interchain with G-Cter in SUMO2) cross-links involve residues lysine 28, lysine 51, and lysine 56. Residues lysine 157 and lysine 169 each participate in a glycyl lysine isopeptide (Lys-Gly) (interchain with G-Cter in SUMO) cross-link. A Glycyl lysine isopeptide (Lys-Gly) (interchain with G-Cter in SUMO2) cross-link involves residue lysine 173. The interaction with TERF2IP stretch occupies residues 212 to 292 (YECNVCGKAF…HIRHQKIHTH (81 aa)).

It belongs to the krueppel C2H2-type zinc-finger protein family. Binds DNA. Interacts with SUMO conjugating enzyme UBC9/UBE2I. Interacts with the telomeric protein TERF2IP. Expressed in heart, brain, liver, lung, skeletal muscle and kidney, and at much lower level in spleen and testicle. Expressed in lactating mammary gland.

It is found in the nucleus. The protein is Zinc finger protein OZF (Znf146) of Mus musculus (Mouse).